The sequence spans 629 residues: Phosphatidylinositol-3,5-bisphosphate 3-phosphatase MTMR8 (629 aa).

A Myotubularin phosphatase domain is found at 126–500 (GWKLIDLKVD…FSFQFWCGMY (375 aa)). Asn250, Asn275, and Ile276 together coordinate a 1,2-diacyl-sn-glycero-3-phospho-(1D-myo-inositol-3,5-bisphosphate). A 1,2-diacyl-sn-glycero-3-phospho-(1D-myo-inositol-3-phosphate) contacts are provided by Asn250, Asn275, and Ile276. Cys338 acts as the Phosphocysteine intermediate in catalysis. A 1,2-diacyl-sn-glycero-3-phospho-(1D-myo-inositol-3,5-bisphosphate) is bound by residues Ser339, Asp340, Gly341, Trp342, Asp343, Arg344, Lys380, and Arg384. Residues Ser339, Asp340, Gly341, Trp342, Asp343, and Arg344 each contribute to the a 1,2-diacyl-sn-glycero-3-phospho-(1D-myo-inositol-3-phosphate) site. Positions 339 and 340 each coordinate phosphate. Positions 342, 343, and 344 each coordinate phosphate. Residue Arg384 participates in a 1,2-diacyl-sn-glycero-3-phospho-(1D-myo-inositol-3-phosphate) binding. A coiled-coil region spans residues 517–543 (LLSCMNQKIKLEDNASELENKLPFLDG).

This sequence belongs to the protein-tyrosine phosphatase family. Non-receptor class myotubularin subfamily. In terms of assembly, homodimer.

It is found in the nucleus envelope. The catalysed reaction is a 1,2-diacyl-sn-glycero-3-phospho-(1D-myo-inositol-3,5-bisphosphate) + H2O = a 1,2-diacyl-sn-glycero-3-phospho-(1D-myo-inositol-5-phosphate) + phosphate. The enzyme catalyses a 1,2-diacyl-sn-glycero-3-phospho-(1D-myo-inositol-3-phosphate) + H2O = a 1,2-diacyl-sn-glycero-3-phospho-(1D-myo-inositol) + phosphate. It catalyses the reaction 1,2-dioctanoyl-sn-glycero-3-phospho-(1D-myo-inositol-3,5-bisphosphate) + H2O = 1,2-dioctanoyl-sn-glycero-3-phospho-(1D-myo-inositol-5-phosphate) + phosphate. Lipid phosphatase that specifically dephosphorylates the D-3 position of phosphatidylinositol 3-phosphate and phosphatidylinositol 3,5-bisphosphate, generating phosphatidylinositol and phosphatidylinositol 5-phosphate. The polypeptide is Phosphatidylinositol-3,5-bisphosphate 3-phosphatase MTMR8 (Gallus gallus (Chicken)).